The primary structure comprises 388 residues: Galactokinase (388 aa).

33 to 36 (EHTD) lines the substrate pocket. ATP is bound by residues S67 and 124-130 (GSGLSSS). Mg(2+) contacts are provided by S130 and E162. The active-site Proton acceptor is D174. A substrate-binding site is contributed by Y224.

It belongs to the GHMP kinase family. GalK subfamily.

Its subcellular location is the cytoplasm. The enzyme catalyses alpha-D-galactose + ATP = alpha-D-galactose 1-phosphate + ADP + H(+). It functions in the pathway carbohydrate metabolism; galactose metabolism. Functionally, catalyzes the transfer of the gamma-phosphate of ATP to D-galactose to form alpha-D-galactose-1-phosphate (Gal-1-P). In Streptococcus thermophilus (strain ATCC BAA-491 / LMD-9), this protein is Galactokinase.